A 310-amino-acid polypeptide reads, in one-letter code: Acetaldehyde dehydrogenase 1 (310 aa).

NAD(+) is bound at residue 12–15 (SGNI). Cysteine 132 functions as the Acyl-thioester intermediate in the catalytic mechanism. Residues 163-171 (SAGPGTRAN) and asparagine 287 contribute to the NAD(+) site.

This sequence belongs to the acetaldehyde dehydrogenase family.

It catalyses the reaction acetaldehyde + NAD(+) + CoA = acetyl-CoA + NADH + H(+). This is Acetaldehyde dehydrogenase 1 from Pseudomonas putida (strain W619).